The primary structure comprises 434 residues: Glutamyl-tRNA reductase (434 aa).

Substrate contacts are provided by residues 52 to 55, Ser-115, 120 to 122, and Gln-126; these read TCNR and ETQ. Residue Cys-53 is the Nucleophile of the active site. NADP(+) is bound at residue 195–200; that stretch reads GAGEMI.

It belongs to the glutamyl-tRNA reductase family. Homodimer.

The enzyme catalyses (S)-4-amino-5-oxopentanoate + tRNA(Glu) + NADP(+) = L-glutamyl-tRNA(Glu) + NADPH + H(+). It participates in porphyrin-containing compound metabolism; protoporphyrin-IX biosynthesis; 5-aminolevulinate from L-glutamyl-tRNA(Glu): step 1/2. In terms of biological role, catalyzes the NADPH-dependent reduction of glutamyl-tRNA(Glu) to glutamate 1-semialdehyde (GSA). This Cupriavidus metallidurans (strain ATCC 43123 / DSM 2839 / NBRC 102507 / CH34) (Ralstonia metallidurans) protein is Glutamyl-tRNA reductase.